A 210-amino-acid polypeptide reads, in one-letter code: Putative protein-lysine deacylase ABHD14B (210 aa).

Alanine 2 carries the post-translational modification N-acetylalanine. Residue serine 91 is modified to Phosphoserine. Active-site charge relay system residues include serine 111, aspartate 162, and histidine 188.

The protein belongs to the AB hydrolase superfamily. ABHD14 family. In terms of assembly, may interact with TAF1. Ubiquitous. Detected in spleen, thymus, prostate, testis, ovary, small intestine, colon, peripheral blood leukocyte, heart, placenta, lung, liver, skeletal muscle, pancreas and kidney.

It is found in the cytoplasm. The protein resides in the nucleus. It catalyses the reaction L-lysyl-[protein] + acetyl-CoA = N(6)-acetyl-L-lysyl-[protein] + CoA + H(+). In terms of biological role, acts as an atypical protein-lysine deacetylase in vitro. Catalyzes the deacetylation of lysine residues using CoA as substrate, generating acetyl-CoA and the free amine of protein-lysine residues. Additional experiments are however required to confirm the protein-lysine deacetylase activity in vivo. Has hydrolase activity towards various surrogate p-nitrophenyl (pNp) substrates, such as pNp-butyrate, pNp-acetate and pNp-octanoate in vitro, with a strong preference for pNp-acetate. May activate transcription. In Homo sapiens (Human), this protein is Putative protein-lysine deacylase ABHD14B.